The sequence spans 480 residues: Adenosylhomocysteinase (480 aa).

Residues threonine 63, aspartate 142, and glutamate 203 each coordinate substrate. 204 to 206 (TTT) lines the NAD(+) pocket. Residues lysine 233 and aspartate 237 each coordinate substrate. NAD(+) contacts are provided by residues asparagine 238, 267–272 (GYGDVG), glutamate 290, asparagine 325, 346–348 (IGH), and asparagine 394.

Belongs to the adenosylhomocysteinase family. The cofactor is NAD(+).

The protein resides in the cytoplasm. It carries out the reaction S-adenosyl-L-homocysteine + H2O = L-homocysteine + adenosine. Its pathway is amino-acid biosynthesis; L-homocysteine biosynthesis; L-homocysteine from S-adenosyl-L-homocysteine: step 1/1. In terms of biological role, may play a key role in the regulation of the intracellular concentration of adenosylhomocysteine. This chain is Adenosylhomocysteinase, found in Xanthomonas oryzae pv. oryzae (strain PXO99A).